Consider the following 527-residue polypeptide: Exodeoxyribonuclease 7 large subunit (527 aa).

Positions 499 to 527 (AGEEGAPPPAAPKKRASRPVVPTKQGSLF) are disordered.

Belongs to the XseA family. In terms of assembly, heterooligomer composed of large and small subunits.

The protein localises to the cytoplasm. It catalyses the reaction Exonucleolytic cleavage in either 5'- to 3'- or 3'- to 5'-direction to yield nucleoside 5'-phosphates.. Bidirectionally degrades single-stranded DNA into large acid-insoluble oligonucleotides, which are then degraded further into small acid-soluble oligonucleotides. The chain is Exodeoxyribonuclease 7 large subunit from Sinorhizobium fredii (strain NBRC 101917 / NGR234).